A 166-amino-acid polypeptide reads, in one-letter code: Endoribonuclease YbeY (166 aa).

Zn(2+) contacts are provided by His132, His136, and His142.

Belongs to the endoribonuclease YbeY family. Requires Zn(2+) as cofactor.

The protein localises to the cytoplasm. Functionally, single strand-specific metallo-endoribonuclease involved in late-stage 70S ribosome quality control and in maturation of the 3' terminus of the 16S rRNA. The chain is Endoribonuclease YbeY from Clostridium acetobutylicum (strain ATCC 824 / DSM 792 / JCM 1419 / IAM 19013 / LMG 5710 / NBRC 13948 / NRRL B-527 / VKM B-1787 / 2291 / W).